Reading from the N-terminus, the 549-residue chain is Eukaryotic translation initiation factor 3 subunit D-2 (549 aa).

Residues 107–157 (ARVKGRSGRGPGMLGVAGSMAGGGTTSGSTKYGKGRESRRNQGRRFARNAP) form a disordered region. The span at 114–132 (GRGPGMLGVAGSMAGGGTT) shows a compositional bias: gly residues. The segment at 288 to 302 (QFDLLTVNETSLEPP) is RNA gate. Residues 527-549 (NSFDSDAEDEENSSEPFANSLDN) form a disordered region. The segment covering 529-539 (FDSDAEDEENS) has biased composition (acidic residues).

This sequence belongs to the eIF-3 subunit D family. In terms of assembly, component of the eukaryotic translation initiation factor 3 (eIF-3) complex. The eIF-3 complex interacts with pix.

It is found in the cytoplasm. MRNA cap-binding component of the eukaryotic translation initiation factor 3 (eIF-3) complex, which is involved in protein synthesis of a specialized repertoire of mRNAs and, together with other initiation factors, stimulates binding of mRNA and methionyl-tRNAi to the 40S ribosome. The eIF-3 complex specifically targets and initiates translation of a subset of mRNAs involved in cell proliferation. In the eIF-3 complex, eif3d specifically recognizes and binds the 7-methylguanosine cap of a subset of mRNAs. The protein is Eukaryotic translation initiation factor 3 subunit D-2 of Drosophila ananassae (Fruit fly).